The primary structure comprises 247 residues: Segregation and condensation protein A (247 aa).

Belongs to the ScpA family. In terms of assembly, component of a cohesin-like complex composed of ScpA, ScpB and the Smc homodimer, in which ScpA and ScpB bind to the head domain of Smc. The presence of the three proteins is required for the association of the complex with DNA.

It is found in the cytoplasm. In terms of biological role, participates in chromosomal partition during cell division. May act via the formation of a condensin-like complex containing Smc and ScpB that pull DNA away from mid-cell into both cell halves. In Caldanaerobacter subterraneus subsp. tengcongensis (strain DSM 15242 / JCM 11007 / NBRC 100824 / MB4) (Thermoanaerobacter tengcongensis), this protein is Segregation and condensation protein A.